Here is a 43-residue protein sequence, read N- to C-terminus: YKRCHKKGGHCFPKEKICTPPSSDFGKMDCRWKWKCCKKGSVN.

Intrachain disulfides connect cysteine 4/cysteine 36, cysteine 11/cysteine 30, and cysteine 18/cysteine 37.

The protein belongs to the crotamine-myotoxin family. Monomer. In terms of tissue distribution, expressed by the venom gland.

The protein localises to the secreted. Its function is as follows. Cationic peptide that possesses multiple functions. It acts as a cell-penetrating peptide (CPP), and as a potent voltage-gated potassium channel (Kv) inhibitor. It exhibits antimicrobial activities, hind limb paralysis, and severe muscle necrosis by a non-enzymatic mechanism. This Crotalus concolor (Midget faded rattlesnake) protein is Myotoxin-2.